A 275-amino-acid polypeptide reads, in one-letter code: tRNA (guanine-N(1)-)-methyltransferase (275 aa).

S-adenosyl-L-methionine-binding positions include G139 and 159 to 164; that span reads IGDYIL.

It belongs to the RNA methyltransferase TrmD family. As to quaternary structure, homodimer.

The protein localises to the cytoplasm. The catalysed reaction is guanosine(37) in tRNA + S-adenosyl-L-methionine = N(1)-methylguanosine(37) in tRNA + S-adenosyl-L-homocysteine + H(+). Specifically methylates guanosine-37 in various tRNAs. The chain is tRNA (guanine-N(1)-)-methyltransferase from Lachnoclostridium phytofermentans (strain ATCC 700394 / DSM 18823 / ISDg) (Clostridium phytofermentans).